Here is a 327-residue protein sequence, read N- to C-terminus: Methionyl-tRNA formyltransferase (327 aa).

(6S)-5,6,7,8-tetrahydrofolate is bound at residue 113 to 116; it reads SILP.

It belongs to the Fmt family.

The enzyme catalyses L-methionyl-tRNA(fMet) + (6R)-10-formyltetrahydrofolate = N-formyl-L-methionyl-tRNA(fMet) + (6S)-5,6,7,8-tetrahydrofolate + H(+). Functionally, attaches a formyl group to the free amino group of methionyl-tRNA(fMet). The formyl group appears to play a dual role in the initiator identity of N-formylmethionyl-tRNA by promoting its recognition by IF2 and preventing the misappropriation of this tRNA by the elongation apparatus. The sequence is that of Methionyl-tRNA formyltransferase from Colwellia psychrerythraea (strain 34H / ATCC BAA-681) (Vibrio psychroerythus).